Reading from the N-terminus, the 175-residue chain is Secretion monitor (175 aa).

The first 38 residues, 1–38 (MSIINFWRQFGRRYFWSHLLLGMVAAGIGMPSLVSAHA), serve as a signal peptide directing secretion.

This sequence belongs to the SecM family.

Its subcellular location is the cytoplasm. It is found in the cytosol. It localises to the periplasm. Functionally, regulates secA expression by translational coupling of the secM secA operon. Translational pausing at a specific Pro residue 5 residues before the end of the protein may allow disruption of a mRNA repressor helix that normally suppresses secA translation initiation. The chain is Secretion monitor from Proteus mirabilis (strain HI4320).